Consider the following 282-residue polypeptide: Pantothenate synthetase (282 aa).

ATP is bound at residue 30–37 (MGALHRGH). The Proton donor role is filled by His-37. Gln-61 is a binding site for (R)-pantoate. Beta-alanine is bound at residue Gln-61. 147-150 (GEKD) contacts ATP. Gln-153 serves as a coordination point for (R)-pantoate. 184 to 187 (LSSR) contacts ATP.

Belongs to the pantothenate synthetase family. As to quaternary structure, homodimer.

The protein resides in the cytoplasm. It carries out the reaction (R)-pantoate + beta-alanine + ATP = (R)-pantothenate + AMP + diphosphate + H(+). It participates in cofactor biosynthesis; (R)-pantothenate biosynthesis; (R)-pantothenate from (R)-pantoate and beta-alanine: step 1/1. Functionally, catalyzes the condensation of pantoate with beta-alanine in an ATP-dependent reaction via a pantoyl-adenylate intermediate. This is Pantothenate synthetase from Rhizorhabdus wittichii (strain DSM 6014 / CCUG 31198 / JCM 15750 / NBRC 105917 / EY 4224 / RW1) (Sphingomonas wittichii).